A 624-amino-acid chain; its full sequence is DNA damage response protein Mdb1 (624 aa).

Disordered stretches follow at residues 177–237 (ERIP…DDES), 249–386 (GETK…KNKH), and 591–624 (IGKRNVSKASRTGQGRKRSSRSSWNKPSAKEQRT). Basic and acidic residues-rich tracts occupy residues 200–217 (DEKLVLDGQHVEGDHSSD) and 225–235 (EDQKQLNKTDD). Positions 250–263 (ETKSPSSVSQSLSG) are enriched in polar residues. Phosphoserine is present on residues serine 253 and serine 283. Residues 294 to 305 (NISDSSIKNNSI) show a composition bias toward low complexity. Basic and acidic residues-rich tracts occupy residues 306–316 (HSDEVNPEVRP) and 325–352 (EESKRSAPEIALKEKESTSQDESNREAE). A compositionally biased stretch (polar residues) spans 356–386 (ISTNYSFPSSSLEDQPDKNVQSSAVENKNKH). One can recognise a BRCT domain in the interval 376–468 (QSSAVENKNK…KVLDFRSYKY (93 aa)).

As to quaternary structure, homodimer. Interacts (via BRCT domain) with hta1 peptide containing the S/T-Q motif in vitro; this interaction requires phosphorylation of the hta1 peptide at the S/T-Q motif.

It is found in the nucleus. It localises to the chromosome. The protein localises to the cytoplasm. The protein resides in the cytoskeleton. Its subcellular location is the spindle. Its function is as follows. Involved in DNA damage response (DDR) mediated through its interaction with phosphorylated H2A proteins hta1 and hta2 which mark the discrete foci of DNA damage. This Schizosaccharomyces pombe (strain 972 / ATCC 24843) (Fission yeast) protein is DNA damage response protein Mdb1.